Here is a 562-residue protein sequence, read N- to C-terminus: MNNNKRPLYIPYAGPALLSTPLLNKGSAFSTTERKYFNLEGLLPEAIESIEEQTGRAYKQYQNFENDMDKHIYLRNIQDTNETLFYRLVQNHISEMMPIIYTPTVGAACENFSNIYRRGRGLFISYENKNRIDDLLNNAANQNVKVIVVTDGERILGLGDQGIGGMGIPIGKLALYTACGGISPAHTLPIVLDVGTNNPQRLADPMYMGWRHPRVTGDEYADFVEDFIQAVQRRWPEALVQFEDFAQKNAMPLLERYKNRICCFNDDIQGTAAVTVGSLLAACKAAGSSLSEQRVTFLGAGSAGCGIAEAIIAQMVSEGISDAQARSQVYMVDRWGLLQEGMPNLLDFQQRLVQKAENTKDWVSEEPNFSLVDVMRNAKPTVLIGVSGAPGLFSKEVIQEMHKHCERPIVFPLSNPTSRVEATPNDIIRWTDGQALVATGSPFDPVAHNGQTYPIAQCNNSFIFPGIGLGVLAIKATRVTDEMLMESSRALAECSPLAIHGTGALLPPLEEIHSVSKRIAFAVAKKAIEQGHALEITDEALQQKIESYFWKPVYRRYKRTAF.

Y101 acts as the Proton donor in catalysis. R154 is an NAD(+) binding site. The active-site Proton acceptor is the K172. Residues E243, D244, and D267 each contribute to the a divalent metal cation site. NAD(+)-binding residues include D267 and N415.

This sequence belongs to the malic enzymes family. Homotetramer. It depends on Mg(2+) as a cofactor. Requires Mn(2+) as cofactor.

It carries out the reaction (S)-malate + NAD(+) = pyruvate + CO2 + NADH. The catalysed reaction is oxaloacetate + H(+) = pyruvate + CO2. This chain is NAD-dependent malic enzyme, found in Aliivibrio fischeri (strain ATCC 700601 / ES114) (Vibrio fischeri).